The following is a 231-amino-acid chain: Ribosomal RNA large subunit methyltransferase E (231 aa).

S-adenosyl-L-methionine-binding residues include Gly-76, Trp-78, Asp-99, Asp-115, and Asp-139. The active-site Proton acceptor is Lys-179.

Belongs to the class I-like SAM-binding methyltransferase superfamily. RNA methyltransferase RlmE family.

Its subcellular location is the cytoplasm. The enzyme catalyses uridine(2552) in 23S rRNA + S-adenosyl-L-methionine = 2'-O-methyluridine(2552) in 23S rRNA + S-adenosyl-L-homocysteine + H(+). In terms of biological role, specifically methylates the uridine in position 2552 of 23S rRNA at the 2'-O position of the ribose in the fully assembled 50S ribosomal subunit. In Bradyrhizobium sp. (strain BTAi1 / ATCC BAA-1182), this protein is Ribosomal RNA large subunit methyltransferase E.